We begin with the raw amino-acid sequence, 933 residues long: Serine/threonine-protein kinase PknD (933 aa).

Residues 4 to 291 (YDIIRMIGKG…ELKDDIEQHL (288 aa)) enclose the Protein kinase domain. ATP-binding positions include 10–18 (IGKGGMGEV) and lysine 33. Aspartate 138 acts as the Proton acceptor in catalysis.

The protein belongs to the protein kinase superfamily. Ser/Thr protein kinase family. Post-translationally, autophosphorylated on serine and threonine residues.

The catalysed reaction is L-seryl-[protein] + ATP = O-phospho-L-seryl-[protein] + ADP + H(+). It carries out the reaction L-threonyl-[protein] + ATP = O-phospho-L-threonyl-[protein] + ADP + H(+). Functionally, together with the serine/threonine kinase Pkn1, may play a role in the specific interactions with host proteins during intracellular growth. This Chlamydia felis (strain Fe/C-56) (Chlamydophila felis) protein is Serine/threonine-protein kinase PknD.